Reading from the N-terminus, the 204-residue chain is Transcriptional regulator GfcR 1 (204 aa).

This sequence belongs to the purine/pyrimidine phosphoribosyltransferase family. GfcR subfamily.

In Methanosarcina barkeri (strain Fusaro / DSM 804), this protein is Transcriptional regulator GfcR 1.